Reading from the N-terminus, the 255-residue chain is Ribonuclease HII (255 aa).

Residues 72–255 (AIICGIDEVG…KSFEPIKSLL (184 aa)) form the RNase H type-2 domain. Residues D78, E79, and D170 each contribute to the a divalent metal cation site.

This sequence belongs to the RNase HII family. Mn(2+) serves as cofactor. Mg(2+) is required as a cofactor.

The protein localises to the cytoplasm. It carries out the reaction Endonucleolytic cleavage to 5'-phosphomonoester.. Its function is as follows. Endonuclease that specifically degrades the RNA of RNA-DNA hybrids. This is Ribonuclease HII from Staphylococcus aureus (strain bovine RF122 / ET3-1).